A 149-amino-acid chain; its full sequence is MHCPFCFAVDTKVIDSRLVGEGSSVRRRRQCLVCNERFTTFEVAELVMPRVVKSNDVREPFNEDKLRSGMQKALEKRPVSSDDVEMAINHIKSHLRATGEREVPSKLIGNLVMEQLKKLDKVAYIRFASVYRSFEDIREFGEEIARLQD.

Residues 3–34 (CPFCFAVDTKVIDSRLVGEGSSVRRRRQCLVC) fold into a zinc finger. Residues 49 to 139 (PRVVKSNDVR…VYRSFEDIRE (91 aa)) form the ATP-cone domain.

This sequence belongs to the NrdR family. Zn(2+) serves as cofactor.

In terms of biological role, negatively regulates transcription of bacterial ribonucleotide reductase nrd genes and operons by binding to NrdR-boxes. In Cronobacter sakazakii (strain ATCC BAA-894) (Enterobacter sakazakii), this protein is Transcriptional repressor NrdR.